Reading from the N-terminus, the 288-residue chain is Hemin import ATP-binding protein HmuV (288 aa).

The region spanning 31 to 269 (LRARGLVVER…DLLTRVYQHP (239 aa)) is the ABC transporter domain. An ATP-binding site is contributed by 68-75 (GPNGAGKS).

It belongs to the ABC transporter superfamily. Heme (hemin) importer (TC 3.A.1.14.5) family. As to quaternary structure, the complex is composed of two ATP-binding proteins (HmuV), two transmembrane proteins (HmuU) and a solute-binding protein (HmuT).

The protein resides in the cell membrane. Functionally, part of the ABC transporter complex HmuTUV involved in hemin import. Responsible for energy coupling to the transport system. This chain is Hemin import ATP-binding protein HmuV, found in Nocardia farcinica (strain IFM 10152).